The chain runs to 447 residues: Phosphoglucosamine mutase (447 aa).

S104 serves as the catalytic Phosphoserine intermediate. Mg(2+) is bound by residues S104, D243, D245, and D247. Phosphoserine is present on S104.

The protein belongs to the phosphohexose mutase family. Mg(2+) serves as cofactor. Post-translationally, activated by phosphorylation.

The enzyme catalyses alpha-D-glucosamine 1-phosphate = D-glucosamine 6-phosphate. In terms of biological role, catalyzes the conversion of glucosamine-6-phosphate to glucosamine-1-phosphate. This chain is Phosphoglucosamine mutase, found in Corynebacterium efficiens (strain DSM 44549 / YS-314 / AJ 12310 / JCM 11189 / NBRC 100395).